We begin with the raw amino-acid sequence, 653 residues long: Alpha-L-iduronidase (653 aa).

The first 27 residues, Met1 to Glu27, serve as a signal peptide directing secretion. Alpha-D-mannopyranose is bound by residues Pro54, Leu56, and His58. Residue His91 coordinates alpha-L-iduronate. Asn110 is a glycosylation site (N-linked (GlcNAc...) asparagine). The alpha-L-iduronate site is built by Asn181 and Glu182. The active-site Proton donor is the Glu182. Asn190 carries N-linked (GlcNAc...) asparagine glycosylation. Alpha-L-iduronate-binding residues include Lys264, Glu299, and Gly305. Residue Glu299 is the Nucleophile of the active site. Trp306 provides a ligand contact to alpha-D-mannopyranose. A glycan (N-linked (GlcNAc...) asparagine) is linked at Asn336. Positions 349 and 363 each coordinate alpha-L-iduronate. N-linked (GlcNAc...) asparagine glycosylation is found at Asn372, Asn415, and Asn451. The alpha-D-mannopyranose site is built by Arg488 and Arg492. Residue Arg492 participates in beta-D-mannose binding. A disulfide bridge connects residues Cys541 and Cys577.

This sequence belongs to the glycosyl hydrolase 39 family. Monomer. In terms of processing, N-glycosylation at Asn-372 contributes to substrate binding and is required for full enzymatic activity. As to expression, ubiquitous.

It localises to the lysosome. The catalysed reaction is Hydrolysis of unsulfated alpha-L-iduronosidic linkages in dermatan sulfate.. This chain is Alpha-L-iduronidase (IDUA), found in Homo sapiens (Human).